We begin with the raw amino-acid sequence, 629 residues long: tRNA uridine 5-carboxymethylaminomethyl modification enzyme MnmG (629 aa).

Gly-13–Gly-18 contributes to the FAD binding site. An NAD(+)-binding site is contributed by Gly-273–Phe-287.

Belongs to the MnmG family. Homodimer. Heterotetramer of two MnmE and two MnmG subunits. It depends on FAD as a cofactor.

It is found in the cytoplasm. Functionally, NAD-binding protein involved in the addition of a carboxymethylaminomethyl (cmnm) group at the wobble position (U34) of certain tRNAs, forming tRNA-cmnm(5)s(2)U34. This chain is tRNA uridine 5-carboxymethylaminomethyl modification enzyme MnmG, found in Aeromonas salmonicida (strain A449).